Reading from the N-terminus, the 576-residue chain is Sodium/proton antiporter 1 (576 aa).

Residues 1-60 (MAVFPIGSHFAPPHQLTKRHVIATSSPISISTRLPQNVSFSKVSGVTGSTRLSKHGVLVR) constitute a chloroplast transit peptide. The next 9 membrane-spanning stretches (helical) occupy residues 237–257 (TLLW…DNLT), 279–299 (LGGV…IGDV), 320–340 (FLPS…TSEV), 357–377 (APRG…VPVF), 379–399 (ALTG…LWIL), 426–446 (GALF…AGIL), 462–482 (LIAS…LVAA), 501–521 (LIAF…AAGV), and 541–561 (FAFA…NLHF).

It belongs to the NhaD Na(+)/H(+) (TC 2.A.62) antiporter family. In terms of tissue distribution, mostly expressed in mature and senescent leaves, and, to a lower extent, in seeds, roots, shoots, flowers and developing siliques.

It localises to the plastid. The protein resides in the chloroplast membrane. The protein localises to the chloroplast envelope. Functionally, na(+)/H(+) antiporter that extrudes sodium in exchange for external protons. This Arabidopsis thaliana (Mouse-ear cress) protein is Sodium/proton antiporter 1.